The following is a 124-amino-acid chain: Photoactive yellow protein (124 aa).

The PAS domain maps to 22–85 (AESLPFGAVL…GEFLKFNRTG (64 aa)). Cys68 bears the S-(4-hydroxycinnamyl)cysteine mark.

Belongs to the photoactive yellow protein family. The 4-hydroxycinnamic acid (p-coumaric acid) chromophore is covalently bound via a thioester linkage.

In terms of biological role, this photoactive protein is a photoreceptor with kinetics similar to that of rhodopsin. This Rhodobacter capsulatus (strain ATCC BAA-309 / NBRC 16581 / SB1003) protein is Photoactive yellow protein (pyp).